The primary structure comprises 308 residues: Phenylcoumaran benzylic ether reductase Pyrc5 (308 aa).

NADP(+)-binding positions include 11–17 (GGTGYIG), arginine 36, and lysine 45. The active-site Proton acceptor is lysine 133. Arginine 137 contributes to the NADP(+) binding site.

Belongs to the NmrA-type oxidoreductase family. Isoflavone reductase subfamily.

The catalysed reaction is (-)-dehydrodiconiferyl alcohol + NADPH + H(+) = (S)-isodihydrodehydrodiconiferyl alcohol + NADP(+). The enzyme catalyses (+)-dehydrodiconiferyl alcohol + NADPH + H(+) = (R)-isodihydrodehydrodiconiferyl alcohol + NADP(+). In terms of biological role, oxidoreductase involved in lignan biosynthesis. Catalyzes the NADPH-dependent reduction of phenylcoumaran benzylic ethers. Converts dehydrodiconiferyl alcohol (DDC) to isodihydrodehydrodiconiferyl alcohol (IDDDC). This Pyrus communis (Pear) protein is Phenylcoumaran benzylic ether reductase Pyrc5.